Reading from the N-terminus, the 338-residue chain is tRNA N6-adenosine threonylcarbamoyltransferase (338 aa).

Fe cation is bound by residues His111 and His115. Substrate-binding positions include 134-138, Asp167, Gly180, and Asn272; that span reads LVSGG. Residue Asp300 coordinates Fe cation.

The protein belongs to the KAE1 / TsaD family. Fe(2+) is required as a cofactor.

It is found in the cytoplasm. The enzyme catalyses L-threonylcarbamoyladenylate + adenosine(37) in tRNA = N(6)-L-threonylcarbamoyladenosine(37) in tRNA + AMP + H(+). In terms of biological role, required for the formation of a threonylcarbamoyl group on adenosine at position 37 (t(6)A37) in tRNAs that read codons beginning with adenine. Is involved in the transfer of the threonylcarbamoyl moiety of threonylcarbamoyl-AMP (TC-AMP) to the N6 group of A37, together with TsaE and TsaB. TsaD likely plays a direct catalytic role in this reaction. This chain is tRNA N6-adenosine threonylcarbamoyltransferase, found in Shewanella oneidensis (strain ATCC 700550 / JCM 31522 / CIP 106686 / LMG 19005 / NCIMB 14063 / MR-1).